Consider the following 499-residue polypeptide: MTDTQDKNYIIALDQGTTSSRAIIFDRDANVVGTSQREFAQHYPQAGWVEHDPMEIFATQSATMVEALAQAGISHAQVAALGITNQRETTVVWDKETGRPVYNAIVWQCRRSTEICAQLKRDGHEGYIRETTGLVTDPYFSGTKLKWILDNVDGARERAERGELLFGTIDTWLIWKFTGGKVHVTDYTNASRTLMFNIHSLQWDDKLLQILGIPRQMLPEVRPSSEVYGHTKSGIAIAGIAGDQQSALFGQMCVEPGQAKNTYGTGCFLLMNTGDQAVKSSHGLLTTIACGPRGEVAYALEGAVFNGGSTVQWLRDELKIVNDALDTEYFASKVKDSNGVYLVPAFTGLGAPYWDPYARGALFGLTRGVKVDHIIRAALESIAYQTRDVLDAMQQDCGQRLSELRVDGGAVANNFLMQFQADILGTCVERPQMRETTALGAAYLAGLACGFWSGLDELRDKAIIEREFSPQLDETQKEKLYAGWKKAVERTRDWEDHEA.

An ADP-binding site is contributed by Thr-17. Thr-17, Thr-18, and Ser-19 together coordinate ATP. Thr-17 serves as a coordination point for sn-glycerol 3-phosphate. Position 21 (Arg-21) interacts with ADP. Residues Arg-87, Glu-88, Tyr-139, and Asp-243 each contribute to the sn-glycerol 3-phosphate site. Glycerol contacts are provided by Arg-87, Glu-88, Tyr-139, Asp-243, and Gln-244. ADP-binding residues include Thr-265 and Gly-308. ATP-binding residues include Thr-265, Gly-308, Gln-312, and Gly-409. 2 residues coordinate ADP: Gly-409 and Asn-413.

The protein belongs to the FGGY kinase family.

The catalysed reaction is glycerol + ATP = sn-glycerol 3-phosphate + ADP + H(+). The protein operates within polyol metabolism; glycerol degradation via glycerol kinase pathway; sn-glycerol 3-phosphate from glycerol: step 1/1. With respect to regulation, inhibited by fructose 1,6-bisphosphate (FBP). Its function is as follows. Key enzyme in the regulation of glycerol uptake and metabolism. Catalyzes the phosphorylation of glycerol to yield sn-glycerol 3-phosphate. The protein is Glycerol kinase of Pseudomonas putida (strain ATCC 700007 / DSM 6899 / JCM 31910 / BCRC 17059 / LMG 24140 / F1).